Here is a 688-residue protein sequence, read N- to C-terminus: PHD finger protein 21A (688 aa).

Lysine 65 is covalently cross-linked (Glycyl lysine isopeptide (Lys-Gly) (interchain with G-Cter in SUMO2)). 2 disordered regions span residues serine 78–serine 127 and proline 327–glutamine 373. Over residues glutamine 85–serine 127 the composition is skewed to low complexity. Basic and acidic residues predominate over residues serine 336 to glutamate 354. The a.T hook DNA-binding region spans threonine 434–valine 446. Residues phenylalanine 449–glutamate 471 are disordered. Threonine 453 bears the Phosphothreonine mark. Serine 456 bears the Phosphoserine mark. The segment at glutamate 497–glutamine 544 adopts a PHD-type zinc-finger fold. Residues lysine 571–methionine 609 adopt a coiled-coil conformation. The tract at residues glycine 650–lysine 688 is disordered. Residues proline 660 to alanine 679 are compositionally biased toward low complexity.

In terms of assembly, component of a BHC histone deacetylase complex that contains HDAC1, HDAC2, HMG20B/BRAF35, KDM1A, RCOR1/CoREST and PHF21A/BHC80. The BHC complex may also contain ZMYM2, ZNF217, ZMYM3, GSE1 and GTF2I. In the complex, it interacts directly with HDAC1, HDAC2, HMG20B/BRAF35, KDM1A and RCOR1/CoREST. Expressed in the brain and testis. Weakly or not expressed in other tissues tested. Localized throughout the central nervous system (CNS) in brain, including the cerebellum, hippocampus, and cortex. Notably present in neuronal cells of granular cell layer and dentate gyrus in cerebellum and hippocampus, respectively. In the seminiferous tubules, the signals it is present strongly in spermatocytes, and weakly in spermatogonia and round spermatids. In some cases, it is also observed solely in spermatocytes (at protein level).

Its subcellular location is the nucleus. In terms of biological role, component of the BHC complex, a corepressor complex that represses transcription of neuron-specific genes in non-neuronal cells. The BHC complex is recruited at RE1/NRSE sites by REST and acts by deacetylating and demethylating specific sites on histones, thereby acting as a chromatin modifier. In the BHC complex, it may act as a scaffold. Inhibits KDM1A-mediated demethylation of 'Lys-4' of histone H3 in vitro, suggesting a role in demethylation regulation. This is PHD finger protein 21A from Mus musculus (Mouse).